The chain runs to 627 residues: Ski protein homolog (627 aa).

The segment covering 1–12 (MSDSPIGSSQQV) has biased composition (polar residues). 3 disordered regions span residues 1–22 (MSDS…PDLM), 34–58 (LHEE…KDSR), and 299–318 (EYDE…METP).

The protein belongs to the SKI family. In terms of assembly, may interact with daf-3. Expressed in ganglia in the head and tail and in the anterior pharynx.

It is found in the nucleus. In terms of biological role, probable component of transcriptional regulatory complex with SMAD protein daf-3. Required to regulate entry into a developmentally arrested larval state known as dauer, in response to harsh environmental conditions. Involved in larvae undergoing cell-cycle arrest during the dauer stage. The protein is Ski protein homolog of Caenorhabditis elegans.